Consider the following 142-residue polypeptide: Large ribosomal subunit protein uL11 (142 aa).

This sequence belongs to the universal ribosomal protein uL11 family. Part of the ribosomal stalk of the 50S ribosomal subunit. Interacts with L10 and the large rRNA to form the base of the stalk. L10 forms an elongated spine to which L12 dimers bind in a sequential fashion forming a multimeric L10(L12)X complex. One or more lysine residues are methylated.

In terms of biological role, forms part of the ribosomal stalk which helps the ribosome interact with GTP-bound translation factors. The chain is Large ribosomal subunit protein uL11 from Hydrogenovibrio crunogenus (strain DSM 25203 / XCL-2) (Thiomicrospira crunogena).